Reading from the N-terminus, the 337-residue chain is Phosphate acyltransferase (337 aa).

Belongs to the PlsX family. In terms of assembly, homodimer. Probably interacts with PlsY.

Its subcellular location is the cytoplasm. The catalysed reaction is a fatty acyl-[ACP] + phosphate = an acyl phosphate + holo-[ACP]. The protein operates within lipid metabolism; phospholipid metabolism. Catalyzes the reversible formation of acyl-phosphate (acyl-PO(4)) from acyl-[acyl-carrier-protein] (acyl-ACP). This enzyme utilizes acyl-ACP as fatty acyl donor, but not acyl-CoA. This Polynucleobacter asymbioticus (strain DSM 18221 / CIP 109841 / QLW-P1DMWA-1) (Polynucleobacter necessarius subsp. asymbioticus) protein is Phosphate acyltransferase.